The chain runs to 90 residues: Small ribosomal subunit protein bS20 (90 aa).

The disordered stretch occupies residues 1-25 (MANSAQARKRARQAAKANSHNSALR).

It belongs to the bacterial ribosomal protein bS20 family.

Binds directly to 16S ribosomal RNA. The chain is Small ribosomal subunit protein bS20 from Burkholderia orbicola (strain MC0-3).